Reading from the N-terminus, the 120-residue chain is Flagellar protein FliT (120 aa).

The interval 1-50 (MERHQHLLSEYQQILTLSEQMLMLATVENWNTLVDLEMTYLKAVENTANI) is required for homodimerization. The fliD binding stretch occupies residues 60-98 (LQELLRQKLRSILENEIEIKRLLQRRLDKLSELVGQSTR).

This sequence belongs to the FliT family. Homodimer. Interacts with FliD and FlhC.

It is found in the cytoplasm. It localises to the cytosol. Its function is as follows. Dual-function protein that regulates the transcription of class 2 flagellar operons and that also acts as an export chaperone for the filament-capping protein FliD. As a transcriptional regulator, acts as an anti-FlhDC factor; it directly binds FlhC, thus inhibiting the binding of the FlhC/FlhD complex to class 2 promoters, resulting in decreased expression of class 2 flagellar operons. As a chaperone, effects FliD transition to the membrane by preventing its premature polymerization, and by directing it to the export apparatus. This chain is Flagellar protein FliT, found in Yersinia pestis (strain Pestoides F).